We begin with the raw amino-acid sequence, 1046 residues long: DNA-directed RNA polymerase subunit beta' (1046 aa).

Positions 383, 385, and 387 each coordinate Mg(2+). Positions 752, 826, 833, and 836 each coordinate Zn(2+).

The protein belongs to the RNA polymerase beta' chain family. In terms of assembly, the RNAP catalytic core consists of 2 alpha, 1 beta, 1 beta' and 1 omega subunit. When a sigma factor is associated with the core the holoenzyme is formed, which can initiate transcription. Mg(2+) is required as a cofactor. Requires Zn(2+) as cofactor.

It catalyses the reaction RNA(n) + a ribonucleoside 5'-triphosphate = RNA(n+1) + diphosphate. Functionally, DNA-dependent RNA polymerase catalyzes the transcription of DNA into RNA using the four ribonucleoside triphosphates as substrates. The polypeptide is DNA-directed RNA polymerase subunit beta' (Weissella hellenica).